A 106-amino-acid polypeptide reads, in one-letter code: NADH-quinone oxidoreductase subunit K (106 aa).

A run of 3 helical transmembrane segments spans residues Ile-8–Val-28, Ile-35–Phe-55, and Val-66–Leu-86.

Belongs to the complex I subunit 4L family. In terms of assembly, NDH-1 is composed of 14 different subunits. Subunits NuoA, H, J, K, L, M, N constitute the membrane sector of the complex.

It localises to the cell inner membrane. It catalyses the reaction a quinone + NADH + 5 H(+)(in) = a quinol + NAD(+) + 4 H(+)(out). In terms of biological role, NDH-1 shuttles electrons from NADH, via FMN and iron-sulfur (Fe-S) centers, to quinones in the respiratory chain. The immediate electron acceptor for the enzyme in this species is believed to be a menaquinone. Couples the redox reaction to proton translocation (for every two electrons transferred, four hydrogen ions are translocated across the cytoplasmic membrane), and thus conserves the redox energy in a proton gradient. The sequence is that of NADH-quinone oxidoreductase subunit K from Flavobacterium johnsoniae (strain ATCC 17061 / DSM 2064 / JCM 8514 / BCRC 14874 / CCUG 350202 / NBRC 14942 / NCIMB 11054 / UW101) (Cytophaga johnsonae).